Reading from the N-terminus, the 1228-residue chain is Serine/threonine-protein kinase CST20 (1228 aa).

A compositionally biased stretch (polar residues) spans 1–18 (MSILSENNPTQTSITDPN). Disordered regions lie at residues 1 to 382 (MSIL…TAHN) and 405 to 468 (NSTN…HSQE). 2 stretches are compositionally biased toward low complexity: residues 57–70 (NTTSANTSSLSLGS) and 95–123 (ESGSSDIDDSQQSHNNNNNNNNNESNPES). Residues 148-159 (HQGDDSDNEKQY) are compositionally biased toward basic and acidic residues. Polar residues-rich tracts occupy residues 173–195 (DSYSPGTLESPGTLNALETNNVS), 205–222 (TSSLEDLSLSLQHQNENA), and 232–244 (PQVSTSKTSSFHD). A compositionally biased stretch (low complexity) spans 246 to 255 (SSVISSSTSV). Polar residues-rich tracts occupy residues 260 to 275 (SNPTSTRGSHLSSYKS) and 309 to 328 (DTLSSATNSPNLLRNDTLQG). A compositionally biased stretch (low complexity) spans 347–367 (NTSATSRNTSGTSTSTVVKNS). Polar residues predominate over residues 368–382 (RSGTSKLTSTSTAHN). The span at 437-466 (KVRGVFSSMFGKNKSTSSSSSSNSGSNSHS) shows a compositional bias: low complexity. The 14-residue stretch at 473-486 (ISTPFNAKHLAHVG) folds into the CRIB domain. 2 disordered regions span residues 543-829 (FHFD…ALAD) and 865-917 (LREK…KQAA). Residues 548–559 (NKSSSSGWSNEN) show a composition bias toward polar residues. Positions 568–579 (SNSGSGGGGGGA) are enriched in gly residues. Positions 602–611 (ITPSQSMPTK) are enriched in polar residues. Basic and acidic residues predominate over residues 612-626 (TESKQSENQHPHEDN). Residues 627–640 (ATQYTPRTPTSHVQ) show a composition bias toward polar residues. 3 stretches are compositionally biased toward low complexity: residues 668 to 681 (PSSQSLPRSDSQSD), 693 to 708 (ISPSKIKIRSISSKSL), and 734 to 747 (SIPKSKSHSASLSS). Positions 748-759 (QLRPATNGSTTA) are enriched in polar residues. The span at 787–805 (APPPPPSASPAPPVPPAPP) shows a compositional bias: pro residues. Polar residues predominate over residues 809 to 824 (LSEQTSEIPQQRTAPS). Residues 865-874 (LREKNERQNR) show a composition bias toward basic and acidic residues. The segment covering 875 to 890 (QQETGQNNADTASGGS) has biased composition (polar residues). The 253-residue stretch at 951-1203 (YVDLVKIGQG…ADELLHDNFI (253 aa)) folds into the Protein kinase domain. Residues 957-965 (IGQGASGGV) and Lys981 contribute to the ATP site. Asp1071 functions as the Proton acceptor in the catalytic mechanism.

The protein belongs to the protein kinase superfamily. STE Ser/Thr protein kinase family. STE20 subfamily.

Its subcellular location is the cytoplasm. It is found in the nucleus. It carries out the reaction L-seryl-[protein] + ATP = O-phospho-L-seryl-[protein] + ADP + H(+). The enzyme catalyses L-threonyl-[protein] + ATP = O-phospho-L-threonyl-[protein] + ADP + H(+). In terms of biological role, MAP4K component of the MAPK pathway required for the mating pheromone response, and the regulation of cell polarity and cell cycle. Phosphorylates histone H2B to form H2BS10ph. Required for hyphal formation and virulence. The polypeptide is Serine/threonine-protein kinase CST20 (CST20) (Candida albicans (strain SC5314 / ATCC MYA-2876) (Yeast)).